Here is a 76-residue protein sequence, read N- to C-terminus: Small ribosomal subunit protein bS18 (76 aa).

This sequence belongs to the bacterial ribosomal protein bS18 family. In terms of assembly, part of the 30S ribosomal subunit. Forms a tight heterodimer with protein bS6.

Its function is as follows. Binds as a heterodimer with protein bS6 to the central domain of the 16S rRNA, where it helps stabilize the platform of the 30S subunit. The sequence is that of Small ribosomal subunit protein bS18 from Stutzerimonas stutzeri (strain A1501) (Pseudomonas stutzeri).